An 852-amino-acid polypeptide reads, in one-letter code: Probable LRR receptor-like serine/threonine-protein kinase At1g05700 (852 aa).

An N-terminal signal peptide occupies residues M1 to A25. Residues Q26 to L510 are Extracellular-facing. 9 N-linked (GlcNAc...) asparagine glycosylation sites follow: N138, N182, N231, N240, N258, N293, N400, N415, and N431. LRR repeat units lie at residues R410 to L432, M434 to K457, and F458 to E479. Residue N466 is glycosylated (N-linked (GlcNAc...) asparagine). A helical transmembrane segment spans residues V511–F531. Residues W532–Y852 lie on the Cytoplasmic side of the membrane. Phosphothreonine is present on T561. The Protein kinase domain maps to N570–L843. ATP is bound by residues L576–V584 and K597. Y642 carries the post-translational modification Phosphotyrosine. The active-site Proton acceptor is D693. Phosphoserine occurs at positions 697 and 727. Phosphothreonine is present on residues T728 and T733.

The protein belongs to the protein kinase superfamily. Ser/Thr protein kinase family.

It is found in the membrane. The enzyme catalyses L-seryl-[protein] + ATP = O-phospho-L-seryl-[protein] + ADP + H(+). It carries out the reaction L-threonyl-[protein] + ATP = O-phospho-L-threonyl-[protein] + ADP + H(+). The polypeptide is Probable LRR receptor-like serine/threonine-protein kinase At1g05700 (Arabidopsis thaliana (Mouse-ear cress)).